Consider the following 259-residue polypeptide: Polycomb group RING finger protein 1 (259 aa).

An RING-type zinc finger spans residues 45–84 (CYLCAGYFIDATTITECLHTFCKSCIVKYLQTSKYCPLCN).

Component of a PRC1-like complex.

The protein resides in the nucleus. In terms of biological role, component of a Polycomb group (PcG) multiprotein PRC1-like complex, a complex class required to maintain the transcriptionally repressive state of many genes, including Hox genes, throughout development. PcG PRC1 complex acts via chromatin remodeling and modification of histones; it mediates monoubiquitination of histone H2A 'Lys-119', rendering chromatin heritably changed in its expressibility. This chain is Polycomb group RING finger protein 1 (pcgf1), found in Xenopus tropicalis (Western clawed frog).